Here is a 137-residue protein sequence, read N- to C-terminus: Large ribosomal subunit protein uL22 (137 aa).

Belongs to the universal ribosomal protein uL22 family. As to quaternary structure, part of the 50S ribosomal subunit.

In terms of biological role, this protein binds specifically to 23S rRNA; its binding is stimulated by other ribosomal proteins, e.g. L4, L17, and L20. It is important during the early stages of 50S assembly. It makes multiple contacts with different domains of the 23S rRNA in the assembled 50S subunit and ribosome. Functionally, the globular domain of the protein is located near the polypeptide exit tunnel on the outside of the subunit, while an extended beta-hairpin is found that lines the wall of the exit tunnel in the center of the 70S ribosome. The polypeptide is Large ribosomal subunit protein uL22 (Flavobacterium psychrophilum (strain ATCC 49511 / DSM 21280 / CIP 103535 / JIP02/86)).